Reading from the N-terminus, the 365-residue chain is Ribosomal RNA large subunit methyltransferase M (365 aa).

S-adenosyl-L-methionine contacts are provided by residues serine 188, 221–224 (CPGG), aspartate 240, aspartate 260, and aspartate 277. Lysine 306 (proton acceptor) is an active-site residue.

This sequence belongs to the class I-like SAM-binding methyltransferase superfamily. RNA methyltransferase RlmE family. RlmM subfamily. Monomer.

The protein localises to the cytoplasm. It carries out the reaction cytidine(2498) in 23S rRNA + S-adenosyl-L-methionine = 2'-O-methylcytidine(2498) in 23S rRNA + S-adenosyl-L-homocysteine + H(+). Catalyzes the 2'-O-methylation at nucleotide C2498 in 23S rRNA. The sequence is that of Ribosomal RNA large subunit methyltransferase M from Proteus mirabilis (strain HI4320).